A 509-amino-acid chain; its full sequence is Coiled-coil domain-containing protein 181 (509 aa).

2 disordered regions span residues 1–122 (MDED…EDEE) and 237–369 (FLPP…EKKK). Composition is skewed to basic and acidic residues over residues 22–33 (DLEWLINDKEKS) and 41–56 (ACKK…KENE). Residues 60 to 69 (ELGQQLSDPD) show a composition bias toward polar residues. Composition is skewed to basic and acidic residues over residues 70-82 (NSPK…RRND) and 266-275 (IKKEESEAKG). Residues 319 to 333 (RIQSAGVSPVTSTYC) show a composition bias toward polar residues. 2 coiled-coil regions span residues 335–377 (SPRQ…VFKA) and 418–488 (LKKK…RSKQ). The span at 337-369 (RQKELQKQLERKREKLKREEEQRKLEEENEKKK) shows a compositional bias: basic and acidic residues.

This sequence belongs to the CCDC181 family. In terms of assembly, homodimer. Interacts with HOOK1. Interacts with HOOK2. Interacts with HOOK3. In terms of tissue distribution, predominantly expressed in testis. Expressed at lower level in brain, eye, trachea and lung. Barely expressed in tongue, heart, liver, kidney, spleen and muscle. Present at high level in elongating spermatids, whereas lower levels are observed in round spermatids (at protein level).

The protein localises to the cytoplasm. Its subcellular location is the cytoskeleton. The protein resides in the cell projection. It is found in the cilium. It localises to the flagellum. Functionally, microtubule-binding protein that localizes to the microtubular manchette of elongating spermatids. The sequence is that of Coiled-coil domain-containing protein 181 from Mus musculus (Mouse).